Reading from the N-terminus, the 127-residue chain is RutC family protein PYRAB12510 (127 aa).

Belongs to the RutC family.

The sequence is that of RutC family protein PYRAB12510 from Pyrococcus abyssi (strain GE5 / Orsay).